Here is a 31-residue protein sequence, read N- to C-terminus: Toxin BmKK12 (31 aa).

Pyrrolidone carboxylic acid is present on Gln-1. 3 disulfide bridges follow: Cys-4–Cys-20, Cys-10–Cys-25, and Cys-14–Cys-27. Pro-31 is modified (proline amide).

Belongs to the short scorpion toxin superfamily. Potassium channel inhibitor family. Alpha-KTx 17 subfamily. The N-terminus is blocked. Expressed by the venom gland.

It localises to the secreted. Functionally, blocker of potassium channels (Kv). The sequence is that of Toxin BmKK12 from Olivierus martensii (Manchurian scorpion).